We begin with the raw amino-acid sequence, 218 residues long: MMP 1-O-methyltransferase (218 aa).

The S-adenosyl-L-methionine site is built by Phe-20, Gly-46, Ser-52, Asp-71, Gly-75, and Ser-124. Asp-141 is a binding site for Mg(2+). His-144 (proton acceptor) is an active-site residue. Arg-151 is a binding site for S-adenosyl-L-methionine. Mg(2+) contacts are provided by His-169 and Asp-170.

The protein belongs to the methyltransferase superfamily. In terms of assembly, homodimer. Mg(2+) is required as a cofactor.

The catalysed reaction is 3,3'-di-O-methyl-4alpha-mannobiose + S-adenosyl-L-methionine = 1,3,3'-tri-O-methyl-4alpha-mannobiose + S-adenosyl-L-homocysteine + H(+). Inhibited by EDTA. Its function is as follows. Involved in the biosynthesis of 3-O-methylmannose polysaccharides (MMP), which are intracellular polymethylated polysaccharides implicated in the modulation of fatty acid metabolism in non-tuberculous mycobacteria. Specifically methylates the 1-OH position of 3,3'-di-O-methyl-4alpha-mannobiose, a probable early precursor of MMP, yielding the reducing end dimannoside of MMP. In Mycolicibacterium hassiacum (strain DSM 44199 / CIP 105218 / JCM 12690 / 3849) (Mycobacterium hassiacum), this protein is MMP 1-O-methyltransferase.